The sequence spans 366 residues: MIVTETIIRFENVTKQFDNDPPVLDNVSFEIEKGKFYTLLGPSGCGKTTILRLIAGFLEASEGQIYLGDKVINQIPANKRPVNTVFQDYALFPHLNVYENVAFGLRIKKLKKDAIDEKVKEALRFVNLKGYEKREISEMSGGQRQRVAIARAIVNEPEVILLDEPLSALDLKLRTEMQYELRDLQKRLGITFIFVTHDQEEALAMSDEIFVLNKGEIQQSGTPIDIYDEPINKFVADFIGESNIVNGKMIQDFEVEFVERRFECVDQGFRPNEVVEVVIRPEDLEITSAEKGQLQVTVDWMLFRGVHYEVGCIDTDGNEWLVHTTRKVRVGDKIGLAFEPEAIHVMRLGETEEEFDKRLDSYDEVQ.

The ABC transporter domain occupies 8 to 239; that stretch reads IRFENVTKQF…PINKFVADFI (232 aa). 41–48 contributes to the ATP binding site; it reads GPSGCGKT.

It belongs to the ABC transporter superfamily. Spermidine/putrescine importer (TC 3.A.1.11.1) family. In terms of assembly, the complex is composed of two ATP-binding proteins (PotA), two transmembrane proteins (PotB and PotC) and a solute-binding protein (PotD).

Its subcellular location is the cell membrane. The enzyme catalyses ATP + H2O + polyamine-[polyamine-binding protein]Side 1 = ADP + phosphate + polyamineSide 2 + [polyamine-binding protein]Side 1.. Functionally, part of the ABC transporter complex PotABCD involved in spermidine/putrescine import. Responsible for energy coupling to the transport system. This Listeria monocytogenes serotype 4b (strain F2365) protein is Spermidine/putrescine import ATP-binding protein PotA.